Reading from the N-terminus, the 433-residue chain is Citrate synthase, mitochondrial (433 aa).

Residues H274 and H320 contribute to the active site. R329 contributes to the oxaloacetate binding site. D375 is a catalytic residue. Oxaloacetate is bound by residues R401 and R421.

This sequence belongs to the citrate synthase family. In terms of assembly, homodimer.

The protein localises to the mitochondrion matrix. It catalyses the reaction oxaloacetate + acetyl-CoA + H2O = citrate + CoA + H(+). The protein operates within carbohydrate metabolism; tricarboxylic acid cycle; isocitrate from oxaloacetate: step 1/2. Key enzyme of the Krebs tricarboxylic acid cycle which catalyzes the synthesis of citrate from acetyl coenzyme A and oxaloacetate. The sequence is that of Citrate synthase, mitochondrial (CS) from Gallus gallus (Chicken).